An 84-amino-acid polypeptide reads, in one-letter code: Anaphase-promoting complex subunit 11 (84 aa).

Residues 34-77 (CPDCKLPGDDCPLIWGACNHAFHLHCILKWVNSQTSQAHCPMCR) form an RING-type; atypical zinc finger.

The protein belongs to the RING-box family. Part of the APC/C complex composed of at least 10 subunits. Interacts with APC2.

It localises to the cytoplasm. Its subcellular location is the nucleus. Its pathway is protein modification; protein ubiquitination. In terms of biological role, component of the anaphase promoting complex/cyclosome (APC/C), a cell cycle-regulated E3 ubiquitin-protein ligase complex that controls progression through mitosis and the G1 phase of the cell cycle. The APC/C complex controls several key steps in the cell cycle by mediating ubiquitination and subsequent degradation of target proteins such as cyclins. The APC/C complex is required for the female gametophyte development and is involved in several aspect of development by controlling cell division and cell elongation. Involved in the control of endoreduplication. May recruit the E2 ubiquitin-conjugating enzymes to the complex. In Arabidopsis thaliana (Mouse-ear cress), this protein is Anaphase-promoting complex subunit 11.